The following is a 538-amino-acid chain: RNA-binding protein RO60 (538 aa).

Residue M1 is modified to N-acetylmethionine. Residues S4 and S19 each carry the phosphoserine modification. The TROVE domain occupies 16–369 (IANSQDGYVW…TFKTVEPTGK (354 aa)). The tract at residues 120 to 284 (RIPTHLFTFI…EMPLTALLRN (165 aa)) is RNA-binding. N6-acetyllysine is present on residues K224 and K359. The VWFA-like domain stretch occupies residues 361-538 (FKTVEPTGKR…VIRNFTLDMI (178 aa)). A divalent metal cation-binding residues include S378, S380, and T445.

Belongs to the Ro 60 kDa family. In terms of assembly, identified in a IGF2BP1-dependent mRNP granule complex containing untranslated mRNAs. Found in a complex with PUF60 and Y5 RNA. Interacts with RAB11FIP5.

It localises to the cytoplasm. RNA-binding protein that binds to misfolded non-coding RNAs, pre-5S rRNA, and several small cytoplasmic RNA molecules known as Y RNAs. Binds to endogenous Alu retroelements which are induced by type I interferon and stimulate porinflammatory cytokine secretion. Regulates the expression of Alu retroelements as well as inflammatory genes. May play roles in cilia formation and/or maintenance. This Homo sapiens (Human) protein is RNA-binding protein RO60.